Here is a 130-residue protein sequence, read N- to C-terminus: Small ribosomal subunit protein uS11 (130 aa).

It belongs to the universal ribosomal protein uS11 family. In terms of assembly, part of the 30S ribosomal subunit. Interacts with proteins S7 and S18. Binds to IF-3.

Its function is as follows. Located on the platform of the 30S subunit, it bridges several disparate RNA helices of the 16S rRNA. Forms part of the Shine-Dalgarno cleft in the 70S ribosome. This is Small ribosomal subunit protein uS11 from Bdellovibrio bacteriovorus (strain ATCC 15356 / DSM 50701 / NCIMB 9529 / HD100).